Consider the following 774-residue polypeptide: C6 finger domain transcription factor nscR (774 aa).

The zn(2)-C6 fungal-type DNA-binding region spans 17–43; sequence CELCRERKIKCDKVDPCNNCVSAGVVC. Disordered stretches follow at residues 61-94, 536-559, and 665-697; these read RPMS…SGAV, LQLP…PQEH, and PTFS…SDLS. Residues 67-78 show a composition bias toward pro residues; it reads FVPPRAPTPVAG. Residues 536-548 show a composition bias toward low complexity; that stretch reads LQLPQPSNGSSQP. A compositionally biased stretch (polar residues) spans 665 to 674; that stretch reads PTFSLGSSTG. The span at 675–697 shows a compositional bias: low complexity; it reads TSAAPTPRSRASSTPSDTLSDLS.

The protein resides in the nucleus. Functionally, transcription factor that specifically regulates the neosartoricin biosynthesis gene cluster. This Aspergillus fumigatus (strain ATCC MYA-4609 / CBS 101355 / FGSC A1100 / Af293) (Neosartorya fumigata) protein is C6 finger domain transcription factor nscR.